The sequence spans 302 residues: 33 kDa chaperonin (302 aa).

Disulfide bonds link Cys-247/Cys-249 and Cys-280/Cys-283.

This sequence belongs to the HSP33 family. Post-translationally, under oxidizing conditions two disulfide bonds are formed involving the reactive cysteines. Under reducing conditions zinc is bound to the reactive cysteines and the protein is inactive.

The protein resides in the cytoplasm. Redox regulated molecular chaperone. Protects both thermally unfolding and oxidatively damaged proteins from irreversible aggregation. Plays an important role in the bacterial defense system toward oxidative stress. The chain is 33 kDa chaperonin from Prochlorococcus marinus (strain AS9601).